Consider the following 332-residue polypeptide: Ferredoxin--NADP reductase 1 (332 aa).

FAD-binding residues include Asp-35, Lys-43, Phe-48, Val-88, Phe-123, Asp-284, and Thr-325.

This sequence belongs to the ferredoxin--NADP reductase type 2 family. As to quaternary structure, homodimer. It depends on FAD as a cofactor.

It carries out the reaction 2 reduced [2Fe-2S]-[ferredoxin] + NADP(+) + H(+) = 2 oxidized [2Fe-2S]-[ferredoxin] + NADPH. In Listeria monocytogenes serovar 1/2a (strain ATCC BAA-679 / EGD-e), this protein is Ferredoxin--NADP reductase 1.